Consider the following 242-residue polypeptide: Peroxisomal membrane protein 11-3 (242 aa).

The interval 1–22 (MAAAAAAAGSSDSRKPAAHPPP) is disordered. At 1–102 (MAAAAAAAGS…LRAHPHPPPA (102 aa)) the chain is on the cytoplasmic side. The helical transmembrane segment at 103–123 (VALLAYGGEGVYYFLEQFVWL) threads the bilayer. Topologically, residues 124 to 214 (AKAGLLPAHL…MALGDVTDGK (91 aa)) are lumenal. A helical transmembrane segment spans residues 215–235 (GLLGSSTLMASAGLLSALISA). Residues 236–242 (HKNWNSC) lie on the Cytoplasmic side of the membrane.

It belongs to the peroxin-11 family. As to expression, expressed in seedlings, roots, leaf sheaths, spikelets and endosperm.

It localises to the peroxisome membrane. In terms of biological role, involved in peroxisomal proliferation. This is Peroxisomal membrane protein 11-3 (PEX11-3) from Oryza sativa subsp. japonica (Rice).